The sequence spans 94 residues: uncharacterized protein (94 aa).

This is an uncharacterized protein from Haemophilus influenzae (strain ATCC 51907 / DSM 11121 / KW20 / Rd).